Reading from the N-terminus, the 287-residue chain is Protease HtpX (287 aa).

The next 2 helical transmembrane spans lie at 4-24 (IFLLIATNLAVLLVASIVMSI) and 33-53 (GGLLVFAAIFGFGGAFISLAI). Zn(2+) is bound at residue histidine 139. The active site involves glutamate 140. Histidine 143 is a Zn(2+) binding site. A run of 2 helical transmembrane segments spans residues 154-174 (LIQGVVNTFVIFAARVVAGII) and 195-215 (AVVFVLDMLFGILASIIVAYF). Glutamate 220 provides a ligand contact to Zn(2+).

It belongs to the peptidase M48B family. Zn(2+) is required as a cofactor.

The protein resides in the cell inner membrane. The polypeptide is Protease HtpX (Shewanella sp. (strain MR-4)).